The chain runs to 497 residues: Validamine 7-phosphate valienyltransferase (497 aa).

Aspartate 158 is a binding site for GDP-valienol. Histidine 182 contacts validamine 7-phosphate. GDP-valienol-binding positions include arginine 290, lysine 295, arginine 321, 325-326 (NR), 361-362 (ND), and threonine 366. Validamine 7-phosphate is bound at residue 383–386 (DGQN). GDP-valienol is bound by residues 387–388 (LS) and glutamate 391.

This sequence belongs to the glycosyltransferase 20 family. Homodimer.

It carries out the reaction validamine 7-phosphate + GDP-valienol = validoxylamine A 7'-phosphate + GDP + H(+). Involved in the biosynthesis of the antifungal agent validamycin A. Catalyzes the condensation between GDP-valienol and validamine 7-phosphate via a nonglycosidic C-N bond formation to yield validoxylamine A 7'-phosphate. This chain is Validamine 7-phosphate valienyltransferase, found in Streptomyces hygroscopicus subsp. limoneus.